The chain runs to 127 residues: uncharacterized protein (127 aa).

This is an uncharacterized protein from Schizosaccharomyces pombe (strain 972 / ATCC 24843) (Fission yeast).